The sequence spans 141 residues: Lutropin subunit beta (141 aa).

The first 18 residues, 1–18 (MGTLQGLLLWLLLGTGGA), serve as a signal peptide directing secretion. 6 disulfides stabilise this stretch: Cys29–Cys77, Cys43–Cys92, Cys46–Cys130, Cys54–Cys108, Cys58–Cys110, and Cys113–Cys120. A glycan (N-linked (GlcNAc...) asparagine) is linked at Asn33.

Belongs to the glycoprotein hormones subunit beta family. As to quaternary structure, heterodimer of a common alpha chain and a unique beta chain which confers biological specificity to thyrotropin, lutropin, follitropin and gonadotropin.

It localises to the secreted. Its function is as follows. Promotes spermatogenesis and ovulation by stimulating the testes and ovaries to synthesize steroids. The polypeptide is Lutropin subunit beta (LHB) (Oryctolagus cuniculus (Rabbit)).